A 475-amino-acid chain; its full sequence is tRNA-2-methylthio-N(6)-dimethylallyladenosine synthase (475 aa).

In terms of domain architecture, MTTase N-terminal spans 3–120 (KKLHIKTWGC…LPEMIDQIKD (118 aa)). [4Fe-4S] cluster contacts are provided by Cys12, Cys49, Cys83, Cys157, Cys161, and Cys164. Positions 143-375 (RAEGPSAFVS…QDRITQQAMR (233 aa)) constitute a Radical SAM core domain. A TRAM domain is found at 378–441 (RQMVGTVQRI…TNSLRGVFIR (64 aa)).

It belongs to the methylthiotransferase family. MiaB subfamily. In terms of assembly, monomer. The cofactor is [4Fe-4S] cluster.

It is found in the cytoplasm. The catalysed reaction is N(6)-dimethylallyladenosine(37) in tRNA + (sulfur carrier)-SH + AH2 + 2 S-adenosyl-L-methionine = 2-methylsulfanyl-N(6)-dimethylallyladenosine(37) in tRNA + (sulfur carrier)-H + 5'-deoxyadenosine + L-methionine + A + S-adenosyl-L-homocysteine + 2 H(+). Catalyzes the methylthiolation of N6-(dimethylallyl)adenosine (i(6)A), leading to the formation of 2-methylthio-N6-(dimethylallyl)adenosine (ms(2)i(6)A) at position 37 in tRNAs that read codons beginning with uridine. The protein is tRNA-2-methylthio-N(6)-dimethylallyladenosine synthase of Shewanella pealeana (strain ATCC 700345 / ANG-SQ1).